We begin with the raw amino-acid sequence, 221 residues long: Orotate phosphoribosyltransferase (221 aa).

Residue lysine 26 coordinates 5-phospho-alpha-D-ribose 1-diphosphate. An orotate-binding site is contributed by 34 to 35 (FF). 5-phospho-alpha-D-ribose 1-diphosphate contacts are provided by residues 72 to 73 (YK), arginine 99, lysine 100, lysine 103, histidine 105, and 124 to 132 (DDVITAGTA). Orotate contacts are provided by threonine 128 and arginine 156.

Belongs to the purine/pyrimidine phosphoribosyltransferase family. PyrE subfamily. Homodimer. It depends on Mg(2+) as a cofactor.

The enzyme catalyses orotidine 5'-phosphate + diphosphate = orotate + 5-phospho-alpha-D-ribose 1-diphosphate. The protein operates within pyrimidine metabolism; UMP biosynthesis via de novo pathway; UMP from orotate: step 1/2. Functionally, catalyzes the transfer of a ribosyl phosphate group from 5-phosphoribose 1-diphosphate to orotate, leading to the formation of orotidine monophosphate (OMP). The sequence is that of Orotate phosphoribosyltransferase from Colwellia psychrerythraea (strain 34H / ATCC BAA-681) (Vibrio psychroerythus).